Consider the following 36-residue polypeptide: U-metritoxin-Msn1a (36 aa).

In terms of domain architecture, ShKT spans 4–36 (CKDKLPACGEYRGSFCKLEKVKSNCEKTCGVKC). 3 cysteine pairs are disulfide-bonded: C4–C36, C11–C28, and C19–C32.

This sequence belongs to the sea anemone type 1 potassium channel toxin family. Type 1b subfamily.

It localises to the secreted. The protein localises to the nematocyst. Has hemolytic activity. Inhibits voltage-gated potassium channels (Kv1/KCNA). The protein is U-metritoxin-Msn1a of Metridium senile (Brown sea anemone).